The chain runs to 643 residues: Melanoma-associated antigen C3 (643 aa).

2 consecutive MAGE domains span residues 184–384 and 456–643; these read LDEK…AAGM and LDEK…FCPE. The tract at residues 347–421 is disordered; it reads NPQGLAGHRQ…PQSPLDSCSS (75 aa). Basic and acidic residues predominate over residues 354 to 363; it reads HRQEDGRRGL. A compositionally biased stretch (pro residues) spans 383–414; it reads GMPPLPQSPPEIPPQGPPKISPQGPPQSPPQS. A phosphothreonine mark is found at Thr-478, Thr-484, and Thr-485.

Expressed in testis. Not expressed in other normal tissues, but is expressed in tumors of different histological origins.

This Homo sapiens (Human) protein is Melanoma-associated antigen C3 (MAGEC3).